We begin with the raw amino-acid sequence, 262 residues long: MSLPATAPAAAPVPKMEARHLSVRYGEKLAVKDISLALPERQVTALIGPSGCGKSTFLRALNRMNDLIPGARAEGEILLDGESVFDRHIDAVELRRRVGMVFQKSNPFPKSIFENVAYGLRVSGLKDRAALAERVERSLVNAALWDEVKDRLGESALGLSGGQQQRLCIARALAVEPEVVLMDEPASALDPIATAKIEDLIHHLKARYTIAIVTHNMQQAARVSDQTAFFYMGDLVEVGPTEQIFTNPSEQRTEDYVTGKFG.

One can recognise an ABC transporter domain in the interval 16-257; it reads MEARHLSVRY…PSEQRTEDYV (242 aa). Position 48 to 55 (48 to 55) interacts with ATP; it reads GPSGCGKS.

It belongs to the ABC transporter superfamily. Phosphate importer (TC 3.A.1.7) family. In terms of assembly, the complex is composed of two ATP-binding proteins (PstB), two transmembrane proteins (PstC and PstA) and a solute-binding protein (PstS).

Its subcellular location is the cell inner membrane. It carries out the reaction phosphate(out) + ATP + H2O = ADP + 2 phosphate(in) + H(+). Part of the ABC transporter complex PstSACB involved in phosphate import. Responsible for energy coupling to the transport system. This is Phosphate import ATP-binding protein PstB from Anaeromyxobacter dehalogenans (strain 2CP-C).